A 141-amino-acid chain; its full sequence is Large ribosomal subunit protein uL11 (141 aa).

Belongs to the universal ribosomal protein uL11 family. As to quaternary structure, part of the ribosomal stalk of the 50S ribosomal subunit. Interacts with L10 and the large rRNA to form the base of the stalk. L10 forms an elongated spine to which L12 dimers bind in a sequential fashion forming a multimeric L10(L12)X complex. One or more lysine residues are methylated.

Functionally, forms part of the ribosomal stalk which helps the ribosome interact with GTP-bound translation factors. This Synechococcus sp. (strain JA-2-3B'a(2-13)) (Cyanobacteria bacterium Yellowstone B-Prime) protein is Large ribosomal subunit protein uL11.